The sequence spans 80 residues: Small ribosomal subunit protein uS17 (80 aa).

The protein belongs to the universal ribosomal protein uS17 family. As to quaternary structure, part of the 30S ribosomal subunit.

One of the primary rRNA binding proteins, it binds specifically to the 5'-end of 16S ribosomal RNA. The chain is Small ribosomal subunit protein uS17 from Cereibacter sphaeroides (strain ATCC 17025 / ATH 2.4.3) (Rhodobacter sphaeroides).